We begin with the raw amino-acid sequence, 292 residues long: Shikimate dehydrogenase (NADP(+)) (292 aa).

Shikimate is bound by residues 22–24 (SLS) and S69. K73 (proton acceptor) is an active-site residue. Positions 94 and 111 each coordinate shikimate. NADP(+) contacts are provided by residues 135–139 (GVGGA) and I236. Residue Y238 participates in shikimate binding. G260 provides a ligand contact to NADP(+).

This sequence belongs to the shikimate dehydrogenase family. In terms of assembly, homodimer.

The catalysed reaction is shikimate + NADP(+) = 3-dehydroshikimate + NADPH + H(+). It functions in the pathway metabolic intermediate biosynthesis; chorismate biosynthesis; chorismate from D-erythrose 4-phosphate and phosphoenolpyruvate: step 4/7. Functionally, involved in the biosynthesis of the chorismate, which leads to the biosynthesis of aromatic amino acids. Catalyzes the reversible NADPH linked reduction of 3-dehydroshikimate (DHSA) to yield shikimate (SA). The polypeptide is Shikimate dehydrogenase (NADP(+)) (Streptococcus pyogenes serotype M28 (strain MGAS6180)).